Reading from the N-terminus, the 109-residue chain is Phosphoribosyl-AMP cyclohydrolase (109 aa).

Aspartate 80 lines the Mg(2+) pocket. Residue cysteine 81 participates in Zn(2+) binding. Mg(2+)-binding residues include aspartate 82 and aspartate 84. Residues cysteine 97 and cysteine 104 each coordinate Zn(2+).

The protein belongs to the PRA-CH family. Homodimer. Mg(2+) serves as cofactor. The cofactor is Zn(2+).

It localises to the cytoplasm. It catalyses the reaction 1-(5-phospho-beta-D-ribosyl)-5'-AMP + H2O = 1-(5-phospho-beta-D-ribosyl)-5-[(5-phospho-beta-D-ribosylamino)methylideneamino]imidazole-4-carboxamide. Its pathway is amino-acid biosynthesis; L-histidine biosynthesis; L-histidine from 5-phospho-alpha-D-ribose 1-diphosphate: step 3/9. Catalyzes the hydrolysis of the adenine ring of phosphoribosyl-AMP. The protein is Phosphoribosyl-AMP cyclohydrolase of Clostridium beijerinckii (strain ATCC 51743 / NCIMB 8052) (Clostridium acetobutylicum).